A 448-amino-acid chain; its full sequence is Microtubule-associated protein tau (448 aa).

Over residues 1–16 the composition is skewed to basic and acidic residues; sequence MAEPRQEFDVMEDHAQ. The segment at 1 to 264 is disordered; sequence MAEPRQEFDV…GPMPDLKNVK (264 aa). Position 2 is an N-acetylalanine (Ala-2). Tyr-19 carries the post-translational modification Phosphotyrosine. A Glycyl lysine isopeptide (Lys-Gly) (interchain with G-Cter in ubiquitin) cross-link involves residue Lys-33. A phosphoserine mark is found at Ser-35 and Ser-50. Residues 50-60 are compositionally biased toward polar residues; the sequence is SETSDAKSTPT. 2 positions are modified to phosphothreonine: Thr-58 and Thr-60. The span at 71 to 89 shows a compositional bias: low complexity; it reads EGAPGEQAAAQAPAEIPEG. Thr-100 carries the phosphothreonine modification. Residues 119 to 135 are compositionally biased toward basic and acidic residues; it reads KGKDGTGPDDKKTKGAD. A Phosphothreonine modification is found at Thr-144. At Arg-146 the chain carries Omega-N-methylarginine. An N6,N6-dimethyllysine; alternate modification is found at Lys-154. N6-acetyllysine; alternate is present on Lys-154. Phosphothreonine is present on residues Thr-160, Thr-166, Thr-167, and Thr-172. Residues 163–176 are compositionally biased toward low complexity; it reads PAKTTPTPKTSPAT. Over residues 189–200 the composition is skewed to basic and acidic residues; that stretch reads KSERGESGKSGD. 2 positions are modified to phosphoserine: Ser-198 and Ser-202. The span at 201–221 shows a compositional bias: low complexity; it reads RSGYSSPGSPGTPGSRSRTPS. Position 204 is a phosphotyrosine (Tyr-204). A phosphoserine mark is found at Ser-205, Ser-206, and Ser-209. 2 positions are modified to phosphothreonine: Thr-212 and Thr-219. Ser-221 carries the post-translational modification Phosphoserine. At Thr-224 the chain carries Phosphothreonine. An N6-acetyllysine modification is found at Lys-232. A Phosphothreonine modification is found at Thr-238. Phosphoserine is present on residues Ser-242 and Ser-244. Tau/MAP repeat units lie at residues 251-281, 282-312, 313-343, and 344-375; these read QAAPGPMPDLKNVKSKIGSTENLKHQPGGGK, VQIINKKLDLSNVQSKCGSKDNIKHVPGGGS, VQIVYKPVDLSKVTSKCGSLGNIHHKPGGGQ, and VEVKSEKLDFKDRVQSKIGSLDNITHVPGGGN. Residue Lys-261 forms a Glycyl lysine isopeptide (Lys-Gly) (interchain with G-Cter in ubiquitin) linkage. Lys-266 is modified (N6-acetyllysine; alternate). An N6-methyllysine; alternate modification is found at Lys-266. A Glycyl lysine isopeptide (Lys-Gly) (interchain with G-Cter in ubiquitin); alternate cross-link involves residue Lys-266. Ser-269 carries the post-translational modification Phosphoserine. Residue Lys-274 forms a Glycyl lysine isopeptide (Lys-Gly) (interchain with G-Cter in ubiquitin) linkage. Residue Lys-288 is modified to N6-acetyllysine; alternate. Residue Lys-288 forms a Glycyl lysine isopeptide (Lys-Gly) (interchain with G-Cter in ubiquitin); alternate linkage. Phosphoserine occurs at positions 292 and 296. At Lys-297 the chain carries N6-acetyllysine. An intrachain disulfide couples Cys-298 to Cys-329. Residue Ser-300 is modified to Phosphoserine. Lys-305 bears the N6-acetyllysine; alternate mark. A Glycyl lysine isopeptide (Lys-Gly) (interchain with G-Cter in ubiquitin); alternate cross-link involves residue Lys-305. Ser-312 is modified (phosphoserine). Lys-318 is modified (N6,N6-dimethyllysine; alternate). 3 positions are modified to N6-acetyllysine; alternate: Lys-318, Lys-324, and Lys-328. Glycyl lysine isopeptide (Lys-Gly) (interchain with G-Cter in ubiquitin); alternate cross-links involve residues Lys-318, Lys-324, and Lys-328. Ser-331 carries the phosphoserine modification. N6-acetyllysine; alternate occurs at positions 338, 350, and 354. Residues Lys-338, Lys-350, and Lys-354 each participate in a glycyl lysine isopeptide (Lys-Gly) (interchain with G-Cter in ubiquitin); alternate cross-link. Position 356 is an omega-N-methylarginine (Arg-356). A Phosphoserine modification is found at Ser-359. A Glycyl lysine isopeptide (Lys-Gly) (interchain with G-Cter in ubiquitin) cross-link involves residue Lys-360. A Phosphoserine modification is found at Ser-363. N6-acetyllysine; alternate is present on Lys-376. A Glycyl lysine isopeptide (Lys-Gly) (interchain with G-Cter in ubiquitin); alternate cross-link involves residue Lys-376. Lys-382 participates in a covalent cross-link: Glycyl lysine isopeptide (Lys-Gly) (interchain with G-Cter in ubiquitin). N6-acetyllysine; alternate is present on Lys-392. Residue Lys-392 forms a Glycyl lysine isopeptide (Lys-Gly) (interchain with G-Cter in ubiquitin); alternate linkage. Tyr-401 carries the phosphotyrosine modification. A phosphoserine mark is found at Ser-403 and Ser-407. Residues 405 to 424 form a disordered region; the sequence is VVSGDTSPRHLSNVSSTGSI. Residues 408–423 show a composition bias toward polar residues; it reads GDTSPRHLSNVSSTGS. Thr-410 is subject to Phosphothreonine. Ser-411, Ser-416, Ser-423, and Ser-429 each carry phosphoserine. Thr-434 is modified (phosphothreonine).

In terms of assembly, interacts with MARK1, MARK2, MARK3 and MARK4. Interacts with SQSTM1 when polyubiquitinated. Interacts with PSMC2 through SQSTM1. Interacts with FKBP4. Binds to CSNK1D. Interacts with SGK1. Interacts with PIN1. Interacts with LRRK2. Interacts with LRP1, leading to endocytosis; this interaction is reduced in the presence of LRPAP1/RAP. Polyubiquitinated. Requires functional TRAF6 and may provoke SQSTM1-dependent degradation by the proteasome. In terms of processing, phosphorylation at various serine and threonine residues in S-P or T-P motifs by proline-directed protein kinases (PDPK1, CDK1, CDK5, GSK3, MAPK) (a few sites per protein in interphase, more in mitosis), and at serine residues in K-X-G-S motifs by MAP/microtubule affinity-regulating kinase (MARK1, MARK2, MARK3, MARK4), causing detachment from microtubules, and their disassembly. Phosphorylation at Ser-269 by BRSK1 and BRSK2 in neurons affects ability to bind microtubules and plays a role in neuron polarization. Phosphorylated by PHK. Dephosphorylation at several serine and threonine residues by the serine/threonine phosphatase PPP5C. Post-translationally, O-glycosylated; contains at least 4 GlcNAc. Site-specific or stoichiometric changes in glycosylation may modulate tau function and also play a role in PHF's formation. In terms of tissue distribution, expressed in neurons.

Its subcellular location is the cytoplasm. The protein localises to the cytosol. The protein resides in the cell membrane. It is found in the cytoskeleton. It localises to the cell projection. Its subcellular location is the axon. The protein localises to the dendrite. The protein resides in the secreted. Functionally, promotes microtubule assembly and stability, and might be involved in the establishment and maintenance of neuronal polarity. The C-terminus binds axonal microtubules while the N-terminus binds neural plasma membrane components, suggesting that tau functions as a linker protein between both. Axonal polarity is predetermined by tau localization (in the neuronal cell) in the domain of the cell body defined by the centrosome. The short isoforms allow plasticity of the cytoskeleton whereas the longer isoforms may preferentially play a role in its stabilization. This chain is Microtubule-associated protein tau (MAPT), found in Bos taurus (Bovine).